The following is a 297-amino-acid chain: Protoheme IX farnesyltransferase (297 aa).

9 helical membrane passes run 26-46 (VTQL…PGMV), 48-68 (YPVL…AFAV), 96-116 (LHII…LWNF), 120-140 (LTMW…TWLL), 147-167 (NIVI…AAVT), 174-194 (AWHL…ALAL), 218-238 (LLNI…PYIY), 245-265 (YLIS…ALFI), and 276-296 (FRFS…DHYF).

Belongs to the UbiA prenyltransferase family. Protoheme IX farnesyltransferase subfamily.

Its subcellular location is the cell inner membrane. It carries out the reaction heme b + (2E,6E)-farnesyl diphosphate + H2O = Fe(II)-heme o + diphosphate. The protein operates within porphyrin-containing compound metabolism; heme O biosynthesis; heme O from protoheme: step 1/1. Converts heme B (protoheme IX) to heme O by substitution of the vinyl group on carbon 2 of heme B porphyrin ring with a hydroxyethyl farnesyl side group. The chain is Protoheme IX farnesyltransferase from Polynucleobacter necessarius subsp. necessarius (strain STIR1).